A 216-amino-acid chain; its full sequence is Ribose-5-phosphate isomerase A (216 aa).

Substrate contacts are provided by residues 26 to 29 (TGST), 79 to 82 (DGAD), and 92 to 95 (KGGG). Residue Glu101 is the Proton acceptor of the active site. Lys119 lines the substrate pocket.

This sequence belongs to the ribose 5-phosphate isomerase family. As to quaternary structure, homodimer.

It carries out the reaction aldehydo-D-ribose 5-phosphate = D-ribulose 5-phosphate. Its pathway is carbohydrate degradation; pentose phosphate pathway; D-ribose 5-phosphate from D-ribulose 5-phosphate (non-oxidative stage): step 1/1. Functionally, catalyzes the reversible conversion of ribose-5-phosphate to ribulose 5-phosphate. This is Ribose-5-phosphate isomerase A from Legionella pneumophila subsp. pneumophila (strain Philadelphia 1 / ATCC 33152 / DSM 7513).